The primary structure comprises 1642 residues: Mitochondrial 3' processome subunit 2 (1642 aa).

The transit peptide at 1–27 directs the protein to the mitochondrion; that stretch reads MGLPFLCHTRVCLFSNKIPFVLCGSRF. Disordered stretches follow at residues 43 to 69 and 745 to 772; these read ETLN…PQKK and KGEK…LSGP. Residues 49 to 65 show a composition bias toward polar residues; that stretch reads ELSSPSTSKEPSVGSDS.

As to quaternary structure, component of the mitochondrial 3' processome (MPsome) complex composed at least of terminal uridylyltransferase KRET1/TUT1, 3'-5' exonuclease DSS1, MPSS1, MPSS2 and MPSS3. Within the complex, interacts with DSS1.

It localises to the mitochondrion. In terms of biological role, as part of the mitochondrial 3' processome (MPsome), involved in the maturation of guided RNA (gRNA) precursors. The protein is Mitochondrial 3' processome subunit 2 of Trypanosoma brucei brucei.